Consider the following 923-residue polypeptide: MLRRGSQALRRFSTGRVYFKNKLKLALIGQSLFGQEVYSHLRKEGHRVVGVFTVPDKDGKADPLALAAEKDGTPVFKLPKWRVKGKTIKEVAEAYRSVGAELNVLPFCTQFIPMDIIDSPKHGSIIYHPSILPRHRGASAINWTLIMGDKKAGFSVFWADDGLDTGPILLQRSCDVEPNDTVDALYNRFLFPEGIKAMVEAVQLIADGKAPRIPQPEEGATYEGIQKKENAEISWDQSAEVLHNWIRGHDKVPGAWTEINGQMVTFYGSTLLNSSVPPGEPLEIKGAKKPGLVTKNGLVLFGNDGKALTVRNLQFEDGKMIPASQYFSTGETSVVELTAEEVKVAETIKVIWAGILSNVPIIEDSTDFFKSGASSMDVARLVEEIRQKCGGLQLQNEDVYMATKFEGFIQKVVRKLRGEDQEVELVVDYISKEVNEIMVKMPYQCFINGQFTDADDGKTYDTINPTDGSTICKVSYASLADVDKAVAAAKDAFENGEWGRMNARERGRLMYRLADLLEENQEELATIEALDSGAVYTLALKTHIGMSVQTFRYFAGWCDKIQGSTIPINQARPNRNLTFTKKEPLGVCAIIIPWNYPLMMLAWKSAACLAAGNTLVLKPAQVTPLTALKFAELSVKAGFPKGVINIIPGSGGIAGQRLSEHPDIRKLGFTGSTPIGKQIMKSCAVSNLKKVSLELGGKSPLIIFNDCELDKAVRMGMGAVFFNKGENCIAAGRLFVEESIHDEFVTRVVEEIKKMKIGDPLDRSTDHGPQNHKAHLEKLLQYCETGVKEGATLVYGGRQVQRPGFFMEPTVFTDVEDYMYLAKEESFGPIMVISKFQNGDIDGVLQRANSTEYGLASGVFTRDINKAMYVSEKLEAGTVFINTYNKTDVAAPFGGVKQSGFGKDLGEEALNEYLKTKTVTLEY.

The transit peptide at 1-19 (MLRRGSQALRRFSTGRVYF) directs the protein to the mitochondrion; not cleaved. A hydrolase domain region spans residues 23 to 331 (LKLALIGQSL…PASQYFSTGE (309 aa)). A Phosphoserine modification is found at serine 31. At lysine 60 the chain carries N6-succinyllysine. 110 to 112 (QFI) is a binding site for (6R)-10-formyltetrahydrofolate. Histidine 128 acts as the Proton donor in catalysis. Position 164 (aspartate 164) interacts with (6R)-10-formyltetrahydrofolate. A Carrier domain is found at 339–416 (AEEVKVAETI…GFIQKVVRKL (78 aa)). Position 375 is an O-(pantetheine 4'-phosphoryl)serine (serine 375). The tract at residues 438–923 (MVKMPYQCFI…LKTKTVTLEY (486 aa)) is aldehyde dehydrogenase domain. NADP(+) is bound by residues 592–594 (IPW) and 618–621 (KPAQ). Phosphoserine is present on serine 650. NADP(+) contacts are provided by residues 651-656 (GGIAGQ) and 671-672 (GS). Position 681 is an N6-succinyllysine (lysine 681). Glutamate 694 functions as the Proton acceptor in the catalytic mechanism. 694-695 (EL) lines the NADP(+) pocket. Cysteine 728 (proton donor) is an active-site residue. Lysine 778 is a binding site for NADP(+). Lysine 788 is modified (N6-succinyllysine). Position 825-827 (825-827 (ESF)) interacts with NADP(+). N6-acetyllysine is present on lysine 903.

It in the N-terminal section; belongs to the GART family. The protein in the C-terminal section; belongs to the aldehyde dehydrogenase family. ALDH1L subfamily. Post-translationally, phosphopantetheinylation at Ser-375 by AASDHPPT is required for the formyltetrahydrofolate dehydrogenase activity. In terms of tissue distribution, highly expressed in pancreas, heart, brain and skeletal muscle.

The protein resides in the mitochondrion. The enzyme catalyses (6R)-10-formyltetrahydrofolate + NADP(+) + H2O = (6S)-5,6,7,8-tetrahydrofolate + CO2 + NADPH + H(+). Its function is as follows. Mitochondrial 10-formyltetrahydrofolate dehydrogenase that catalyzes the NADP(+)-dependent conversion of 10-formyltetrahydrofolate to tetrahydrofolate and carbon dioxide. This chain is Mitochondrial 10-formyltetrahydrofolate dehydrogenase, found in Homo sapiens (Human).